Here is a 127-residue protein sequence, read N- to C-terminus: Small ribosomal subunit protein uS11 (127 aa).

The protein belongs to the universal ribosomal protein uS11 family. In terms of assembly, part of the 30S ribosomal subunit. Interacts with proteins S7 and S18. Binds to IF-3.

In terms of biological role, located on the platform of the 30S subunit, it bridges several disparate RNA helices of the 16S rRNA. Forms part of the Shine-Dalgarno cleft in the 70S ribosome. In Streptococcus agalactiae serotype Ia (strain ATCC 27591 / A909 / CDC SS700), this protein is Small ribosomal subunit protein uS11.